Here is a 255-residue protein sequence, read N- to C-terminus: Myogenic factor 5 (255 aa).

Residues 83–134 (DRRKAATMRERRRLKKVNQAFETLKRCTTTNPNQRLPKVEILRNAIQYIESL) form the bHLH domain. Positions 221-242 (SLPIPDSITPSPTSSTDSLPRS) are enriched in low complexity. The tract at residues 221 to 246 (SLPIPDSITPSPTSSTDSLPRSPDAH) is disordered.

As to quaternary structure, efficient DNA binding requires dimerization with another bHLH protein.

It localises to the nucleus. Acts as a transcriptional activator that promotes transcription of muscle-specific target genes and plays a role in muscle differentiation. Induces fibroblasts to differentiate into myoblasts. Probable sequence specific DNA-binding protein. The chain is Myogenic factor 5 (myf5) from Xenopus laevis (African clawed frog).